Here is a 485-residue protein sequence, read N- to C-terminus: 3-isopropylmalate dehydratase large subunit (485 aa).

2 disordered regions span residues 1–20 and 73–92; these read MSDA…QSTG and PERT…RSLP. Positions 364, 424, and 427 each coordinate [4Fe-4S] cluster.

The protein belongs to the aconitase/IPM isomerase family. LeuC type 1 subfamily. In terms of assembly, heterodimer of LeuC and LeuD. Requires [4Fe-4S] cluster as cofactor.

It carries out the reaction (2R,3S)-3-isopropylmalate = (2S)-2-isopropylmalate. Its pathway is amino-acid biosynthesis; L-leucine biosynthesis; L-leucine from 3-methyl-2-oxobutanoate: step 2/4. In terms of biological role, catalyzes the isomerization between 2-isopropylmalate and 3-isopropylmalate, via the formation of 2-isopropylmaleate. This is 3-isopropylmalate dehydratase large subunit from Rhodopirellula baltica (strain DSM 10527 / NCIMB 13988 / SH1).